A 446-amino-acid chain; its full sequence is NAD(P)H sulfur oxidoreductase (CoA-dependent) (446 aa).

17 to 18 (AA) serves as a coordination point for FAD. A CoA-binding site is contributed by Arg28. Residues 39–40 (EA) and 46–48 (HAP) contribute to the FAD site. Residues 45-49 (SHAPC), 66-67 (HY), and Arg76 contribute to the CoA site. The active-site Redox-active is the Cys49. 3 residues coordinate FAD: Val86, Asp284, and Ala302. CoA is bound by residues Asn306 and Lys362. Residue Tyr426 participates in FAD binding. Residues Trp434 and Arg442 each contribute to the CoA site.

Belongs to the class-III pyridine nucleotide-disulfide oxidoreductase family. Requires FAD as cofactor.

It carries out the reaction hydrogen sulfide + NADP(+) = sulfur + NADPH. The enzyme catalyses hydrogen sulfide + NAD(+) = sulfur + NADH. Functionally, catalyzes the CoA-dependent reduction of elemental sulfur (S(0)) to produce hydrogen sulfide. The protein is NAD(P)H sulfur oxidoreductase (CoA-dependent) of Pyrococcus abyssi (strain GE5 / Orsay).